A 120-amino-acid polypeptide reads, in one-letter code: Large ribosomal subunit protein bL19 (120 aa).

Belongs to the bacterial ribosomal protein bL19 family.

Its function is as follows. This protein is located at the 30S-50S ribosomal subunit interface and may play a role in the structure and function of the aminoacyl-tRNA binding site. In Nostoc sp. (strain PCC 7120 / SAG 25.82 / UTEX 2576), this protein is Large ribosomal subunit protein bL19 (rplS).